The sequence spans 451 residues: Chromosomal replication initiator protein DnaA (451 aa).

A domain I, interacts with DnaA modulators region spans residues 1–77; it reads MTENEQIFWN…EVYNAQISVD (77 aa). The domain II stretch occupies residues 77-110; it reads DYVFEEDLMIEQNQTKINQKPKQQALNSLPTVTS. A domain III, AAA+ region region spans residues 111 to 329; sequence DLNSKYSFEN…GALKDISLVA (219 aa). Positions 155, 157, 158, and 159 each coordinate ATP. Residues 330–451 are domain IV, binds dsDNA; sequence NFKQIDTITV…EIETIKNKIK (122 aa).

It belongs to the DnaA family. In terms of assembly, oligomerizes as a right-handed, spiral filament on DNA at oriC.

It localises to the cytoplasm. Its function is as follows. Plays an essential role in the initiation and regulation of chromosomal replication. ATP-DnaA binds to the origin of replication (oriC) to initiate formation of the DNA replication initiation complex once per cell cycle. Binds the DnaA box (a 9 base pair repeat at the origin) and separates the double-stranded (ds)DNA. Forms a right-handed helical filament on oriC DNA; dsDNA binds to the exterior of the filament while single-stranded (ss)DNA is stabiized in the filament's interior. The ATP-DnaA-oriC complex binds and stabilizes one strand of the AT-rich DNA unwinding element (DUE), permitting loading of DNA polymerase. After initiation quickly degrades to an ADP-DnaA complex that is not apt for DNA replication. Binds acidic phospholipids. Functionally, the half-life of ATP-DnaA is 12 minutes at 37 degrees Celsius, in E.coli the half-life is about 41 minutes. The sequence is that of Chromosomal replication initiator protein DnaA from Streptococcus pyogenes serotype M1.